The sequence spans 295 residues: MTKILGSDPVKRGMAQMQKGGVIMDVVNAEQARIAEAAGAVAVMALERVPSDIRAAGGVARMANTTIVREVMEAVSIPVMAKARIGHIVEARVLEAMGVDYIDESEVLTPADEEFHLLKSDYTVPFVCGCRDLGEALRRIGEGASMLRTKGEPGTGNVVEAVRHLRKVNAQLRKVINMSHDELMTEAKYLGAPFELLLQIKTLGKLPVVNFAAGGIATPADAALMMELGADGVFVGSGIFKSENPEKFAKAIVQATTHYQDYDLIARLSADLGEPMRGVEISELAVQDRMQERGW.

Residue aspartate 25 coordinates D-ribose 5-phosphate. Lysine 82 serves as the catalytic Schiff-base intermediate with D-ribose 5-phosphate. Glycine 154 contributes to the D-ribose 5-phosphate binding site. D-glyceraldehyde 3-phosphate is bound at residue arginine 166. D-ribose 5-phosphate contacts are provided by residues glycine 215 and 236-237; that span reads GS.

It belongs to the PdxS/SNZ family. As to quaternary structure, in the presence of PdxT, forms a dodecamer of heterodimers.

The enzyme catalyses aldehydo-D-ribose 5-phosphate + D-glyceraldehyde 3-phosphate + L-glutamine = pyridoxal 5'-phosphate + L-glutamate + phosphate + 3 H2O + H(+). It participates in cofactor biosynthesis; pyridoxal 5'-phosphate biosynthesis. Functionally, catalyzes the formation of pyridoxal 5'-phosphate from ribose 5-phosphate (RBP), glyceraldehyde 3-phosphate (G3P) and ammonia. The ammonia is provided by the PdxT subunit. Can also use ribulose 5-phosphate and dihydroxyacetone phosphate as substrates, resulting from enzyme-catalyzed isomerization of RBP and G3P, respectively. This is Pyridoxal 5'-phosphate synthase subunit PdxS from Actinobacillus pleuropneumoniae serotype 7 (strain AP76).